Here is a 269-residue protein sequence, read N- to C-terminus: Small ribosomal subunit protein uS2 (269 aa).

Positions 235 to 269 are disordered; sequence FDAKNPLKPQNYNTLNKRPYQDSPRKPSYQNQNQR.

This sequence belongs to the universal ribosomal protein uS2 family.

In Aster yellows witches'-broom phytoplasma (strain AYWB), this protein is Small ribosomal subunit protein uS2.